Here is a 466-residue protein sequence, read N- to C-terminus: Glucose-6-phosphate 1-dehydrogenase 1 (466 aa).

Residues S48, 88-89 (DV), and K141 each bind NADP(+). Positions 171, 175, 209, and 228 each coordinate substrate. H233 acts as the Proton acceptor in catalysis. Residues K319 and K324 each coordinate substrate.

The protein belongs to the glucose-6-phosphate dehydrogenase family.

It carries out the reaction D-glucose 6-phosphate + NADP(+) = 6-phospho-D-glucono-1,5-lactone + NADPH + H(+). The protein operates within carbohydrate degradation; pentose phosphate pathway; D-ribulose 5-phosphate from D-glucose 6-phosphate (oxidative stage): step 1/3. In terms of biological role, catalyzes the oxidation of glucose 6-phosphate to 6-phosphogluconolactone. The sequence is that of Glucose-6-phosphate 1-dehydrogenase 1 from Mycobacterium tuberculosis (strain ATCC 25618 / H37Rv).